Here is a 205-residue protein sequence, read N- to C-terminus: Glycerol-3-phosphate acyltransferase (205 aa).

5 helical membrane passes run Ile-4–Val-24, Pro-80–Phe-100, Gly-107–Ala-127, Trp-130–Ile-150, and Val-155–Leu-175.

Belongs to the PlsY family. As to quaternary structure, probably interacts with PlsX.

It localises to the cell inner membrane. The catalysed reaction is an acyl phosphate + sn-glycerol 3-phosphate = a 1-acyl-sn-glycero-3-phosphate + phosphate. It functions in the pathway lipid metabolism; phospholipid metabolism. In terms of biological role, catalyzes the transfer of an acyl group from acyl-phosphate (acyl-PO(4)) to glycerol-3-phosphate (G3P) to form lysophosphatidic acid (LPA). This enzyme utilizes acyl-phosphate as fatty acyl donor, but not acyl-CoA or acyl-ACP. The sequence is that of Glycerol-3-phosphate acyltransferase from Klebsiella pneumoniae (strain 342).